Here is a 317-residue protein sequence, read N- to C-terminus: Beta-ketoacyl-[acyl-carrier-protein] synthase III (317 aa).

Active-site residues include Cys-112 and His-244. The segment at 245 to 249 is ACP-binding; the sequence is QANIR. Asn-274 is an active-site residue.

The protein belongs to the thiolase-like superfamily. FabH family. In terms of assembly, homodimer.

Its subcellular location is the cytoplasm. The enzyme catalyses malonyl-[ACP] + acetyl-CoA + H(+) = 3-oxobutanoyl-[ACP] + CO2 + CoA. It participates in lipid metabolism; fatty acid biosynthesis. Catalyzes the condensation reaction of fatty acid synthesis by the addition to an acyl acceptor of two carbons from malonyl-ACP. Catalyzes the first condensation reaction which initiates fatty acid synthesis and may therefore play a role in governing the total rate of fatty acid production. Possesses both acetoacetyl-ACP synthase and acetyl transacylase activities. Its substrate specificity determines the biosynthesis of branched-chain and/or straight-chain of fatty acids. In Rickettsia massiliae (strain Mtu5), this protein is Beta-ketoacyl-[acyl-carrier-protein] synthase III.